The following is a 277-amino-acid chain: Large ribosomal subunit protein uL15c (277 aa).

Residues 1–67 constitute a chloroplast transit peptide; that stretch reads MATPLSISSN…FARPLVVVSQ (67 aa). Thr68 is subject to N-acetylthreonine. A disordered region spans residues 81 to 125; it reads FRLDNLGPQPGSRKKQKRKGRGISAGQGASCGFGMRGQKSRSGPG. The span at 92-101 shows a compositional bias: basic residues; sequence SRKKQKRKGR. Residues 103–115 are compositionally biased toward gly residues; the sequence is ISAGQGASCGFGM.

Belongs to the universal ribosomal protein uL15 family. As to quaternary structure, part of the 50S ribosomal subunit.

It localises to the plastid. The protein localises to the chloroplast. This is Large ribosomal subunit protein uL15c (RPL15) from Arabidopsis thaliana (Mouse-ear cress).